Reading from the N-terminus, the 54-residue chain is Ribulose bisphosphate carboxylase large chain (54 aa).

The propeptide occupies 1 to 2 (MS). P3 is subject to N-acetylproline. K14 is subject to N6,N6,N6-trimethyllysine.

This sequence belongs to the RuBisCO large chain family. Type I subfamily. Heterohexadecamer of 8 large chains and 8 small chains.

The protein localises to the plastid. The protein resides in the chloroplast. It catalyses the reaction 2 (2R)-3-phosphoglycerate + 2 H(+) = D-ribulose 1,5-bisphosphate + CO2 + H2O. It carries out the reaction D-ribulose 1,5-bisphosphate + O2 = 2-phosphoglycolate + (2R)-3-phosphoglycerate + 2 H(+). In terms of biological role, ruBisCO catalyzes two reactions: the carboxylation of D-ribulose 1,5-bisphosphate, the primary event in carbon dioxide fixation, as well as the oxidative fragmentation of the pentose substrate in the photorespiration process. Both reactions occur simultaneously and in competition at the same active site. In Icacina mannii, this protein is Ribulose bisphosphate carboxylase large chain (rbcL).